The following is a 256-amino-acid chain: Protein YIPF7 (256 aa).

Topologically, residues 1-125 are cytoplasmic; it reads MSNLAQFDSD…VDGSIMNETD (125 aa). 2 stretches are compositionally biased toward polar residues: residues 18 to 31 and 38 to 48; these read IDNQ…SNAY and RKQQAGEQPQP. A disordered region spans residues 18–48; the sequence is IDNQEQSGNDSNAYGNLYGSRKQQAGEQPQP. A helical transmembrane segment spans residues 126–146; it reads LTGPILFCVALGATLLLAGKV. Position 147 (Gln147) is a topological domain, extracellular. Residues 148–168 traverse the membrane as a helical segment; that stretch reads FGYVYGMSAIGCLVIHALLNL. At 169–172 the chain is on the cytoplasmic side; sequence MSSS. The helical transmembrane segment at 173-193 threads the bilayer; that stretch reads GVSYGCVASVLGYCLLPMVIL. The Extracellular segment spans residues 194–196; it reads SGC. Residues 197–217 form a helical membrane-spanning segment; that stretch reads AMFFSLQGIFGIMSSLVIIGW. Topologically, residues 218–235 are cytoplasmic; the sequence is CSLSASKIFIAALHMEGQ. The helical transmembrane segment at 236–256 threads the bilayer; the sequence is QLLVAYPCAILYGLFALLTIF.

It belongs to the YIP1 family.

It is found in the endoplasmic reticulum membrane. It localises to the golgi apparatus. The protein resides in the cis-Golgi network membrane. The protein localises to the trans-Golgi network membrane. This Homo sapiens (Human) protein is Protein YIPF7 (YIPF7).